Reading from the N-terminus, the 274-residue chain is Putative homeobox protein Meis3-like 1 (274 aa).

In terms of domain architecture, MEIS N-terminal spans 12–65 (GGDVCSSDSFNEDNTAFAKQVRSERPFFSSNPELDNLMIQAIQVLRFHLLELEK). 2 disordered regions span residues 108 to 167 (DSGS…KRGI) and 228 to 248 (NRTG…GYTE). Residues 123-135 (GLASQSGDNSSDQ) are compositionally biased toward polar residues. A DNA-binding region (homeobox) is located at residues 161–223 (RNKKRGIFPK…NARRRIVQPM (63 aa)).

The protein belongs to the TALE/MEIS homeobox family.

The protein resides in the nucleus. In Homo sapiens (Human), this protein is Putative homeobox protein Meis3-like 1 (MEIS3P1).